Here is a 210-residue protein sequence, read N- to C-terminus: Large ribosomal subunit protein uL4 (210 aa).

Polar residues predominate over residues 41–52 (MNNARQGTASSK). A disordered region spans residues 41 to 80 (MNNARQGTASSKTRSEVRGGGRKPWRQKGTGRARAGSSRS). The span at 60 to 71 (GGRKPWRQKGTG) shows a compositional bias: basic residues.

Belongs to the universal ribosomal protein uL4 family. In terms of assembly, part of the 50S ribosomal subunit.

Functionally, one of the primary rRNA binding proteins, this protein initially binds near the 5'-end of the 23S rRNA. It is important during the early stages of 50S assembly. It makes multiple contacts with different domains of the 23S rRNA in the assembled 50S subunit and ribosome. In terms of biological role, forms part of the polypeptide exit tunnel. The sequence is that of Large ribosomal subunit protein uL4 from Acaryochloris marina (strain MBIC 11017).